A 340-amino-acid chain; its full sequence is 4-amino-5-hydroxymethyl-2-methylpyrimidine phosphate synthase THI5 (340 aa).

The residue at position 62 (Lys-62) is an N6-(pyridoxal phosphate)lysine. His-66 is an active-site residue. 115–118 contacts pyridoxal 5'-phosphate; it reads GEFG. A CCCFC; essential for catalytic activity, may be the site of iron coordination motif is present at residues 195–199; it reads CCCFC.

It belongs to the NMT1/THI5 family. In terms of assembly, homodimer. Requires Fe cation as cofactor.

The catalysed reaction is N(6)-(pyridoxal phosphate)-L-lysyl-[4-amino-5-hydroxymethyl-2-methylpyrimidine phosphate synthase] + L-histidyl-[4-amino-5-hydroxymethyl-2-methylpyrimidine phosphate synthase] + 2 Fe(3+) + 4 H2O = L-lysyl-[4-amino-5-hydroxymethyl-2-methylpyrimidine phosphate synthase] + (2S)-2-amino-5-hydroxy-4-oxopentanoyl-[4-amino-5-hydroxymethyl-2-methylpyrimidine phosphate synthase] + 4-amino-2-methyl-5-(phosphooxymethyl)pyrimidine + 3-oxopropanoate + 2 Fe(2+) + 2 H(+). The protein operates within cofactor biosynthesis; thiamine diphosphate biosynthesis. In terms of biological role, responsible for the formation of the pyrimidine heterocycle in the thiamine biosynthesis pathway. Catalyzes the formation of hydroxymethylpyrimidine phosphate (HMP-P) from histidine and pyridoxal phosphate (PLP). The protein uses PLP and the active site histidine to form HMP-P, generating an inactive enzyme. The enzyme can only undergo a single turnover, which suggests it is a suicide enzyme. This chain is 4-amino-5-hydroxymethyl-2-methylpyrimidine phosphate synthase THI5, found in Saccharomyces cerevisiae (strain ATCC 204508 / S288c) (Baker's yeast).